Here is a 405-residue protein sequence, read N- to C-terminus: L-carnitine CoA-transferase (405 aa).

CoA contacts are provided by Lys-97 and Arg-104. The Nucleophile role is filled by Asp-169.

Belongs to the CoA-transferase III family. CaiB subfamily. As to quaternary structure, homodimer.

The protein resides in the cytoplasm. It catalyses the reaction crotonobetainyl-CoA + (R)-carnitine = crotonobetaine + (R)-carnitinyl-CoA. The catalysed reaction is 4-(trimethylamino)butanoyl-CoA + (R)-carnitine = (R)-carnitinyl-CoA + 4-(trimethylamino)butanoate. Its pathway is amine and polyamine metabolism; carnitine metabolism. Its function is as follows. Catalyzes the reversible transfer of the CoA moiety from gamma-butyrobetainyl-CoA to L-carnitine to generate L-carnitinyl-CoA and gamma-butyrobetaine. Is also able to catalyze the reversible transfer of the CoA moiety from gamma-butyrobetainyl-CoA or L-carnitinyl-CoA to crotonobetaine to generate crotonobetainyl-CoA. In Salmonella enteritidis PT4 (strain P125109), this protein is L-carnitine CoA-transferase.